Here is a 336-residue protein sequence, read N- to C-terminus: MSNNQRKDTLLSVLNLSPVVQGGTIAESFRNSMDLARRAEEWGYHRYWLAEHHNIEGVASSATAVLIGHIAGGTKKIRVGSGGIMLPNHSSLVIAEQFGTLETLYPGRIDLGLGRAPGTDQLTARALRRNINSGEDFPEQLEELRNYFKPSGNVRNQVRAIPGEGIDVPIWLLGSSGFSARLAGELGLPFAFAAHFSPANTVPALELYRNSFTPSDVLDEPYAMVGVTIIAADTNEKAQHLATSHYQRFLDLVRGTPNQLKPPVEDMDQIWSPYEKAMVNEQLSSTIVGGPEEVKAKLEDFVKTTQADEIMVNSETFEHADRMRSFEIIADVWKNR.

To bacterial alkanal monooxygenase alpha and beta chains.

This is an uncharacterized protein from Bacillus subtilis (strain 168).